The primary structure comprises 185 residues: V-type ATP synthase subunit E (185 aa).

Belongs to the V-ATPase E subunit family.

Its function is as follows. Produces ATP from ADP in the presence of a proton gradient across the membrane. This chain is V-type ATP synthase subunit E, found in Deinococcus radiodurans (strain ATCC 13939 / DSM 20539 / JCM 16871 / CCUG 27074 / LMG 4051 / NBRC 15346 / NCIMB 9279 / VKM B-1422 / R1).